The following is a 20-amino-acid chain: Unknown protein from 2D-PAGE (20 aa).

The protein is Unknown protein from 2D-PAGE of Nicotiana tabacum (Common tobacco).